The sequence spans 297 residues: Putative thiosulfate sulfurtransferase SseA (297 aa).

Rhodanese domains are found at residues 31–138 (GAPG…ETTL) and 168–286 (ILDA…VPIV). C245 (cysteine persulfide intermediate) is an active-site residue. R250 is a binding site for substrate.

It carries out the reaction thiosulfate + hydrogen cyanide = thiocyanate + sulfite + 2 H(+). The sequence is that of Putative thiosulfate sulfurtransferase SseA (sseA) from Mycobacterium bovis (strain ATCC BAA-935 / AF2122/97).